Reading from the N-terminus, the 740-residue chain is MQMDAKTGDISGGCPFHGDGGTRSLLGRTNRDWWPDQLQLEILKEGGRNPDPMGEDFDYVEAFNAIDYTALKQDLTDLMTDSQEWWPADYGHYGPFFIRMAWHAAGTYRTGDGRGGSSSGQQRFAPLNSWPDNGNLDKARRLLWPIKQKYGKHISWADLFILTGNVAIESMGGPVFGFGGGRKDVYEPEMVYWGTEEQWVDTGAETRIHPDEGRALENPLAAIQMGLIYVNPEGPGGDPHDPEGMARDMRETFARMAMNDEETVALTAGGHAFGKCHGAKPADTFGTAPEGENLHLMGMGWLTDEEEIRNGHVTTSGIEGPWTPNPTQWGNDYFRLLFKYEYELTQSPAGAYQWTPVDPEEADMAPDARDPSKKVPTIMTTADMALKRDPDYRKISERFRDDQAALDDAFARAWFKLCHRDMGPKVRYQGPEVPSEDLIWQDPVPSGTAPSDSDVSSFKSAVLDSGLTVSELVKAAWASASTYRNSDHRGGANGARVRLAPQKDWAANDPEELGKVLSKLDELRGNLSMADAIVLAGSAAIEKAARDAGHSVSVDVTTGRGDATDEHTDAESFEPLEPFADGFRNYLKTKASVKTEEMLIDKAHLLGLSIPEMTALVGGMRALGAVSRHADHGDRIGVLTDRPGQLTNDFFVNLLDMGTKWEVVDESGDEEFVGKDRKSGDEKWRATRTDLVFGSNSQLRAQAEVFAESGNEQLFLDTFVKAWTKVMDADRFDVTYAKYN.

The segment at residues 102-229 (WHAAGTYRTG…LAAIQMGLIY (128 aa)) is a cross-link (tryptophyl-tyrosyl-methioninium (Trp-Tyr) (with M-256)). The active-site Proton acceptor is His-103. Residues 111 to 130 (GDGRGGSSSGQQRFAPLNSW) form a disordered region. Positions 229 to 256 (YVNPEGPGGDPHDPEGMARDMRETFARM) form a cross-link, tryptophyl-tyrosyl-methioninium (Tyr-Met) (with W-102). Residue His-271 coordinates heme b.

The protein belongs to the peroxidase family. Peroxidase/catalase subfamily. As to quaternary structure, homodimer or homotetramer. Heme b serves as cofactor. Post-translationally, formation of the three residue Trp-Tyr-Met cross-link is important for the catalase, but not the peroxidase activity of the enzyme.

The enzyme catalyses H2O2 + AH2 = A + 2 H2O. It carries out the reaction 2 H2O2 = O2 + 2 H2O. Its function is as follows. Bifunctional enzyme with both catalase and broad-spectrum peroxidase activity. This is Catalase-peroxidase from Erythrobacter litoralis (strain HTCC2594).